A 471-amino-acid polypeptide reads, in one-letter code: UDP-N-acetylmuramate--L-alanine ligase (471 aa).

An ATP-binding site is contributed by 125–131 (GTHGKTT).

Belongs to the MurCDEF family.

Its subcellular location is the cytoplasm. The enzyme catalyses UDP-N-acetyl-alpha-D-muramate + L-alanine + ATP = UDP-N-acetyl-alpha-D-muramoyl-L-alanine + ADP + phosphate + H(+). It functions in the pathway cell wall biogenesis; peptidoglycan biosynthesis. In terms of biological role, cell wall formation. The protein is UDP-N-acetylmuramate--L-alanine ligase of Kineococcus radiotolerans (strain ATCC BAA-149 / DSM 14245 / SRS30216).